Consider the following 281-residue polypeptide: AB hydrolase superfamily protein YclE (281 aa).

One can recognise an AB hydrolase-1 domain in the interval 30–268; that stretch reads SAVYYPRLFS…SGHQPMLEEP (239 aa). Ser95 acts as the Nucleophile in catalysis. Asp232 is a catalytic residue. His261 functions as the Proton donor in the catalytic mechanism.

Belongs to the AB hydrolase superfamily.

This is AB hydrolase superfamily protein YclE (yclE) from Bacillus subtilis (strain 168).